Here is a 390-residue protein sequence, read N- to C-terminus: Homoserine O-succinyltransferase (390 aa).

The AB hydrolase-1 domain maps to Asn59–Asp369. Ser165 serves as the catalytic Nucleophile. A substrate-binding site is contributed by Arg235. Active-site residues include Asp330 and His363. Asp364 contributes to the substrate binding site.

The protein belongs to the AB hydrolase superfamily. MetX family. Homodimer.

The protein resides in the cytoplasm. The catalysed reaction is L-homoserine + succinyl-CoA = O-succinyl-L-homoserine + CoA. It functions in the pathway amino-acid biosynthesis; L-methionine biosynthesis via de novo pathway; O-succinyl-L-homoserine from L-homoserine: step 1/1. Functionally, transfers a succinyl group from succinyl-CoA to L-homoserine, forming succinyl-L-homoserine. The sequence is that of Homoserine O-succinyltransferase from Cupriavidus pinatubonensis (strain JMP 134 / LMG 1197) (Cupriavidus necator (strain JMP 134)).